We begin with the raw amino-acid sequence, 123 residues long: Fluoride-specific ion channel FluC (123 aa).

A run of 4 helical transmembrane segments spans residues V5–V25, L33–F53, L62–A82, and I94–G114. Residues G72 and S75 each contribute to the Na(+) site.

Belongs to the fluoride channel Fluc/FEX (TC 1.A.43) family.

It localises to the cell inner membrane. The catalysed reaction is fluoride(in) = fluoride(out). With respect to regulation, na(+) is not transported, but it plays an essential structural role and its presence is essential for fluoride channel function. In terms of biological role, fluoride-specific ion channel. Important for reducing fluoride concentration in the cell, thus reducing its toxicity. In Ignicoccus hospitalis (strain KIN4/I / DSM 18386 / JCM 14125), this protein is Fluoride-specific ion channel FluC.